A 635-amino-acid polypeptide reads, in one-letter code: Membrane protein insertase YidC (635 aa).

Residues Leu-8 to Pro-28 traverse the membrane as a helical segment. The interval Pro-33–Gln-61 is disordered. Transmembrane regions (helical) follow at residues Met-396–Phe-416, Leu-470–Ile-490, Ser-528–Met-548, and Ile-564–Val-584. Positions Ile-615 to Lys-635 are disordered. Positions Lys-624–Lys-635 are enriched in basic and acidic residues.

Belongs to the OXA1/ALB3/YidC family. Type 1 subfamily. In terms of assembly, interacts with the Sec translocase complex via SecD. Specifically interacts with transmembrane segments of nascent integral membrane proteins during membrane integration.

The protein localises to the cell inner membrane. Functionally, required for the insertion and/or proper folding and/or complex formation of integral membrane proteins into the membrane. Involved in integration of membrane proteins that insert both dependently and independently of the Sec translocase complex, as well as at least some lipoproteins. Aids folding of multispanning membrane proteins. The sequence is that of Membrane protein insertase YidC from Paracoccus denitrificans (strain Pd 1222).